The chain runs to 387 residues: Exodeoxyribonuclease 7 large subunit (387 aa).

Belongs to the XseA family. In terms of assembly, heterooligomer composed of large and small subunits.

The protein resides in the cytoplasm. The catalysed reaction is Exonucleolytic cleavage in either 5'- to 3'- or 3'- to 5'-direction to yield nucleoside 5'-phosphates.. Functionally, bidirectionally degrades single-stranded DNA into large acid-insoluble oligonucleotides, which are then degraded further into small acid-soluble oligonucleotides. In Campylobacter jejuni subsp. jejuni serotype O:6 (strain 81116 / NCTC 11828), this protein is Exodeoxyribonuclease 7 large subunit.